We begin with the raw amino-acid sequence, 153 residues long: Ubiquitin/ISG15-conjugating enzyme E2 L6 (153 aa).

The UBC core domain occupies 2–149 (MASKRVAKEL…AEEFTLKFGV (148 aa)). Cysteine 86 functions as the Glycyl thioester intermediate in the catalytic mechanism.

This sequence belongs to the ubiquitin-conjugating enzyme family. As to quaternary structure, interacts with RNF19A, RNF19B and RNF144B. Interacts with FLT3 (tyrosine phosphorylated). Post-translationally, ISGylated.

The catalysed reaction is S-ubiquitinyl-[E1 ubiquitin-activating enzyme]-L-cysteine + [E2 ubiquitin-conjugating enzyme]-L-cysteine = [E1 ubiquitin-activating enzyme]-L-cysteine + S-ubiquitinyl-[E2 ubiquitin-conjugating enzyme]-L-cysteine.. It participates in protein modification; protein ubiquitination. Catalyzes the covalent attachment of ubiquitin or ISG15 to other proteins. Functions in the E6/E6-AP-induced ubiquitination of p53/TP53. Promotes ubiquitination and subsequent proteasomal degradation of FLT3. The protein is Ubiquitin/ISG15-conjugating enzyme E2 L6 (Ube2l6) of Mus musculus (Mouse).